A 437-amino-acid chain; its full sequence is Methylenetetrahydrofolate--tRNA-(uracil-5-)-methyltransferase TrmFO (437 aa).

Residue 10 to 15 (GAGLAG) participates in FAD binding.

Belongs to the MnmG family. TrmFO subfamily. Requires FAD as cofactor.

It is found in the cytoplasm. The catalysed reaction is uridine(54) in tRNA + (6R)-5,10-methylene-5,6,7,8-tetrahydrofolate + NADH + H(+) = 5-methyluridine(54) in tRNA + (6S)-5,6,7,8-tetrahydrofolate + NAD(+). It catalyses the reaction uridine(54) in tRNA + (6R)-5,10-methylene-5,6,7,8-tetrahydrofolate + NADPH + H(+) = 5-methyluridine(54) in tRNA + (6S)-5,6,7,8-tetrahydrofolate + NADP(+). Catalyzes the folate-dependent formation of 5-methyl-uridine at position 54 (M-5-U54) in all tRNAs. The polypeptide is Methylenetetrahydrofolate--tRNA-(uracil-5-)-methyltransferase TrmFO (Lysinibacillus sphaericus (strain C3-41)).